Reading from the N-terminus, the 367-residue chain is Probable L-aspartate decarboxylase (367 aa).

Residue K216 is modified to N6-(pyridoxal phosphate)lysine.

This sequence belongs to the group II decarboxylase family. MfnA subfamily. It depends on pyridoxal 5'-phosphate as a cofactor.

The catalysed reaction is L-aspartate + H(+) = beta-alanine + CO2. Its pathway is cofactor biosynthesis; coenzyme A biosynthesis. In terms of biological role, catalyzes the decarboxylation of L-aspartate to produce beta-alanine. This is Probable L-aspartate decarboxylase from Archaeoglobus fulgidus (strain ATCC 49558 / DSM 4304 / JCM 9628 / NBRC 100126 / VC-16).